Reading from the N-terminus, the 255-residue chain is Acetylglutamate kinase (255 aa).

Substrate is bound by residues 40–41 (GG), arginine 62, and asparagine 153.

Belongs to the acetylglutamate kinase family. ArgB subfamily.

The protein resides in the cytoplasm. The catalysed reaction is N-acetyl-L-glutamate + ATP = N-acetyl-L-glutamyl 5-phosphate + ADP. It participates in amino-acid biosynthesis; L-arginine biosynthesis; N(2)-acetyl-L-ornithine from L-glutamate: step 2/4. Functionally, catalyzes the ATP-dependent phosphorylation of N-acetyl-L-glutamate. This Bacillus cereus (strain G9842) protein is Acetylglutamate kinase.